We begin with the raw amino-acid sequence, 161 residues long: Putative acetyltransferase SAV0762 (161 aa).

This sequence belongs to the transferase hexapeptide repeat family.

This chain is Putative acetyltransferase SAV0762, found in Staphylococcus aureus (strain Mu50 / ATCC 700699).